A 777-amino-acid polypeptide reads, in one-letter code: Endonuclease MutS2 (777 aa).

328-335 (GPNTGGKT) contacts ATP. Residues 702–777 (LDLRGKRYEE…GSGCTIATLG (76 aa)) form the Smr domain.

It belongs to the DNA mismatch repair MutS family. MutS2 subfamily. As to quaternary structure, homodimer. Binds to stalled ribosomes, contacting rRNA.

Functionally, endonuclease that is involved in the suppression of homologous recombination and thus may have a key role in the control of bacterial genetic diversity. In terms of biological role, acts as a ribosome collision sensor, splitting the ribosome into its 2 subunits. Detects stalled/collided 70S ribosomes which it binds and splits by an ATP-hydrolysis driven conformational change. Acts upstream of the ribosome quality control system (RQC), a ribosome-associated complex that mediates the extraction of incompletely synthesized nascent chains from stalled ribosomes and their subsequent degradation. Probably generates substrates for RQC. The chain is Endonuclease MutS2 from Streptococcus uberis (strain ATCC BAA-854 / 0140J).